A 142-amino-acid chain; its full sequence is MPTPSMEDYIEQIYLLIDEKGYARVSDIAEALSVHPSSVTKMVQKLDKDEYLIYEKYRGLVLTTKGKKIGERLVYRHDLLEQFMRIIGVDESKIYNDVEGIEHHLSWEAIDRIGDLVQYFEQDTVRVETLRGVQRANEEKSN.

In terms of domain architecture, HTH dtxR-type spans 1 to 63; that stretch reads MPTPSMEDYI…YEKYRGLVLT (63 aa). Mn(2+)-binding residues include D8, E11, H77, E99, E102, and H103.

Belongs to the DtxR/MntR family. Homodimer.

It is found in the cytoplasm. Its activity is regulated as follows. DNA binding is strongly activated by Mn(2+). Its function is as follows. Central regulator of manganese homeostasis. This is HTH-type transcriptional regulator MntR from Bacillus cereus (strain ATCC 14579 / DSM 31 / CCUG 7414 / JCM 2152 / NBRC 15305 / NCIMB 9373 / NCTC 2599 / NRRL B-3711).